The chain runs to 387 residues: Glutamate N-acetyltransferase (387 aa).

The substrate site is built by T140, K162, T173, E257, N382, and T387. T173 functions as the Nucleophile in the catalytic mechanism.

This sequence belongs to the ArgJ family. Heterotetramer of two alpha and two beta chains.

The protein localises to the cytoplasm. The enzyme catalyses N(2)-acetyl-L-ornithine + L-glutamate = N-acetyl-L-glutamate + L-ornithine. It participates in amino-acid biosynthesis; L-arginine biosynthesis; L-ornithine and N-acetyl-L-glutamate from L-glutamate and N(2)-acetyl-L-ornithine (cyclic): step 1/1. Its function is as follows. Catalyzes the transfer of the acetyl group from N(2)-acetylornithine to glutamate, forming N-acetylglutamate and L-ornithine. The chain is Glutamate N-acetyltransferase from Methanopyrus kandleri (strain AV19 / DSM 6324 / JCM 9639 / NBRC 100938).